A 282-amino-acid chain; its full sequence is NFU1 iron-sulfur cluster scaffold homolog, mitochondrial (282 aa).

A mitochondrion-targeting transit peptide spans 1–27; that stretch reads MSKLLSYTARIILRNSRITVRQLVRGF. The interval 178–246 is nifU; the sequence is IKELLDTRIR…IPEVESVEQV (69 aa). Residues Cys215 and Cys218 each contribute to the [4Fe-4S] cluster site. The segment at 263–282 is disordered; the sequence is KNLKQKEPAGAPVGIGGGPN.

It belongs to the NifU family.

The protein localises to the mitochondrion. In terms of biological role, molecular scaffold for [Fe-S] cluster assembly of mitochondrial iron-sulfur proteins. The polypeptide is NFU1 iron-sulfur cluster scaffold homolog, mitochondrial (Drosophila persimilis (Fruit fly)).